Here is a 525-residue protein sequence, read N- to C-terminus: Peptide chain release factor 3 (525 aa).

One can recognise a tr-type G domain in the interval 11–279; sequence DKRRTFAIIS…TYLEYAPQPA (269 aa). GTP is bound by residues 20–27, 88–92, and 142–145; these read SHPDAGKT, DTPGH, and NKLD.

The protein belongs to the TRAFAC class translation factor GTPase superfamily. Classic translation factor GTPase family. PrfC subfamily.

It localises to the cytoplasm. In terms of biological role, increases the formation of ribosomal termination complexes and stimulates activities of RF-1 and RF-2. It binds guanine nucleotides and has strong preference for UGA stop codons. It may interact directly with the ribosome. The stimulation of RF-1 and RF-2 is significantly reduced by GTP and GDP, but not by GMP. In Levilactobacillus brevis (strain ATCC 367 / BCRC 12310 / CIP 105137 / JCM 1170 / LMG 11437 / NCIMB 947 / NCTC 947) (Lactobacillus brevis), this protein is Peptide chain release factor 3.